A 264-amino-acid polypeptide reads, in one-letter code: Thymidylate synthase (264 aa).

R21 is a dUMP binding site. A (6R)-5,10-methylene-5,6,7,8-tetrahydrofolate-binding site is contributed by H51. DUMP is bound at residue 126–127 (RR). The active-site Nucleophile is the C146. Residues 166 to 169 (RSCD), N177, and 207 to 209 (HLY) each bind dUMP. D169 serves as a coordination point for (6R)-5,10-methylene-5,6,7,8-tetrahydrofolate. A263 is a binding site for (6R)-5,10-methylene-5,6,7,8-tetrahydrofolate.

Belongs to the thymidylate synthase family. Bacterial-type ThyA subfamily. As to quaternary structure, homodimer.

The protein localises to the cytoplasm. The enzyme catalyses dUMP + (6R)-5,10-methylene-5,6,7,8-tetrahydrofolate = 7,8-dihydrofolate + dTMP. Its pathway is pyrimidine metabolism; dTTP biosynthesis. Its function is as follows. Catalyzes the reductive methylation of 2'-deoxyuridine-5'-monophosphate (dUMP) to 2'-deoxythymidine-5'-monophosphate (dTMP) while utilizing 5,10-methylenetetrahydrofolate (mTHF) as the methyl donor and reductant in the reaction, yielding dihydrofolate (DHF) as a by-product. This enzymatic reaction provides an intracellular de novo source of dTMP, an essential precursor for DNA biosynthesis. The chain is Thymidylate synthase from Escherichia fergusonii (strain ATCC 35469 / DSM 13698 / CCUG 18766 / IAM 14443 / JCM 21226 / LMG 7866 / NBRC 102419 / NCTC 12128 / CDC 0568-73).